The primary structure comprises 234 residues: Nitroreductase NfnB (234 aa).

25–29 lines the FMN pocket; it reads RRAVR. Residues serine 55, arginine 105, tyrosine 113, and isoleucine 118 each coordinate NADP(+). FMN-binding positions include tyrosine 137, 181 to 182, and arginine 223; that span reads AL.

The protein belongs to the nitroreductase family. As to quaternary structure, homodimer. It depends on FMN as a cofactor.

Confers resistance to antitubercular drugs benzothiazinone (BTZ) and dinitrobenzamide (DNB). Inactivates BTZ and DNB by reducing an essential nitro group of these compounds to amino group or to hydroxyl amine, respectively, using NADH or NADPH as source of reducing equivalents; two electrons are transferred. Able to reduce the nitro group of bicyclic nitroimidazole PA-824, but not of quinone menadione, nitrofurazone, methyl-4-nitrobenzoate, 4-nitrobenzene methyl sulfonate or 4-nitroacetophenone. The protein is Nitroreductase NfnB of Mycolicibacterium smegmatis (strain ATCC 700084 / mc(2)155) (Mycobacterium smegmatis).